The chain runs to 279 residues: NADPH-dependent 7-cyano-7-deazaguanine reductase (279 aa).

86–88 (IES) is a substrate binding site. 88 to 89 (SK) is an NADPH binding site. Cys-187 functions as the Thioimide intermediate in the catalytic mechanism. The Proton donor role is filled by Asp-194. Residue 226–227 (HE) participates in substrate binding. 255 to 256 (RG) is an NADPH binding site.

Belongs to the GTP cyclohydrolase I family. QueF type 2 subfamily. Homodimer.

It is found in the cytoplasm. It carries out the reaction 7-aminomethyl-7-carbaguanine + 2 NADP(+) = 7-cyano-7-deazaguanine + 2 NADPH + 3 H(+). It functions in the pathway tRNA modification; tRNA-queuosine biosynthesis. Its function is as follows. Catalyzes the NADPH-dependent reduction of 7-cyano-7-deazaguanine (preQ0) to 7-aminomethyl-7-deazaguanine (preQ1). The chain is NADPH-dependent 7-cyano-7-deazaguanine reductase from Actinobacillus pleuropneumoniae serotype 7 (strain AP76).